Consider the following 471-residue polypeptide: Thymidine phosphorylase (471 aa).

Residues 1-10 (MAAPGTPPPS) are compositionally biased toward pro residues. The disordered stretch occupies residues 1–21 (MAAPGTPPPSASGGGGGEPRQ). T6 bears the Phosphothreonine mark. Residues H102, R188, S203, and K207 each coordinate substrate.

The protein belongs to the thymidine/pyrimidine-nucleoside phosphorylase family. Homodimer.

The catalysed reaction is thymidine + phosphate = 2-deoxy-alpha-D-ribose 1-phosphate + thymine. The protein operates within pyrimidine metabolism; dTMP biosynthesis via salvage pathway; dTMP from thymine: step 1/2. Catalyzes the reversible phosphorolysis of thymidine. The produced molecules are then utilized as carbon and energy sources or in the rescue of pyrimidine bases for nucleotide synthesis. The polypeptide is Thymidine phosphorylase (Tymp) (Mus musculus (Mouse)).